A 228-amino-acid polypeptide reads, in one-letter code: Tungstate uptake system permease protein TupB (228 aa).

Helical transmembrane passes span Ile-25–Ile-45, Val-65–Leu-85, Ala-102–Leu-122, Val-144–Phe-164, and Met-203–Tyr-223. The ABC transmembrane type-1 domain occupies Ile-26–Ile-222.

It belongs to the binding-protein-dependent transport system permease family. In terms of assembly, the complex is composed of two ATP-binding proteins (TupC), two transmembrane proteins (TupB) and a solute-binding protein (TupA).

The protein resides in the cell membrane. Part of an ABC transporter complex involved in tungstate uptake. Probably responsible for the translocation of the substrate across the membrane. The chain is Tungstate uptake system permease protein TupB from Peptoclostridium acidaminophilum (Eubacterium acidaminophilum).